The following is a 429-amino-acid chain: MLDIKWIRANPDKLDESLSKRGIDSVSKSIIHIDSEKRTLISLIQKLQHERKEKSNSVAHIYDKSSTDFEEIQNDVKLINQKITELETSLLHHEKRLSEIMDNLPNLVADDVPYGTNSDMNKVLKECGTIQNIKFPKHHYEIGKNLGMIDFNTATKMSGSRFVILKHDLAKLERALINFMIDVHTTEFNFFEVSPPCLVKDHAMYNVGQLPKFADASFETTTGYRLIPTAEVPLTNIFANTTLLEEKLPIRLVAFTPCFRSEVGSAGKDVKGMLRMHQFGKVELFTIATPEESNREFEYLTTAAETILKKLCLPYRVVLLCSGDIGFAAHKTYDLEVWLPAQNCYREISSCSHFSSFQARRSLSKYRELCSKKVNFLHTINGSGLAVGRTIIAILENYQNPDGSVTIPEKLRNYMGGQKLITPLTETVF.

229-231 (TAE) provides a ligand contact to L-serine. 260–262 (RSE) is a binding site for ATP. Position 283 (Glu283) interacts with L-serine. 347–350 (EISS) contributes to the ATP binding site. L-serine is bound at residue Ser383.

This sequence belongs to the class-II aminoacyl-tRNA synthetase family. Type-1 seryl-tRNA synthetase subfamily. In terms of assembly, homodimer. The tRNA molecule binds across the dimer.

Its subcellular location is the cytoplasm. It carries out the reaction tRNA(Ser) + L-serine + ATP = L-seryl-tRNA(Ser) + AMP + diphosphate + H(+). It catalyses the reaction tRNA(Sec) + L-serine + ATP = L-seryl-tRNA(Sec) + AMP + diphosphate + H(+). It participates in aminoacyl-tRNA biosynthesis; selenocysteinyl-tRNA(Sec) biosynthesis; L-seryl-tRNA(Sec) from L-serine and tRNA(Sec): step 1/1. Catalyzes the attachment of serine to tRNA(Ser). Is also able to aminoacylate tRNA(Sec) with serine, to form the misacylated tRNA L-seryl-tRNA(Sec), which will be further converted into selenocysteinyl-tRNA(Sec). The sequence is that of Serine--tRNA ligase from Orientia tsutsugamushi (strain Boryong) (Rickettsia tsutsugamushi).